A 394-amino-acid polypeptide reads, in one-letter code: Na(+)/H(+) antiporter NhaA 2 (394 aa).

Transmembrane regions (helical) follow at residues 13 to 33 (FGGVLLIIATILALLFQNGFL), 58 to 78 (LILWVNDGLMAIFFFVVGLEL), 93 to 113 (IALPTIGALGGVILPAVIFWA), 124 to 144 (GWAIPTATDIAFALGVLMLLG), 153 to 173 (IFLLTLAIIDDLCAIVIIAIF), 176 to 196 (TKLSFISFVIAGICLFALWVL), 208 to 228 (ILVTLILWVSVLKSGVHATIA), 260 to 280 (YFILPVFAFVNAGVSLAGVQI), 291 to 311 (IFFGLLIGKQVGVFLFSYIFI), 327 to 347 (FYGVCILTGIGFTMSLFVNSL), and 361 to 381 (LGILLASFTAGVIGYIYLLVF).

The protein belongs to the NhaA Na(+)/H(+) (TC 2.A.33) antiporter family.

It is found in the cell inner membrane. The catalysed reaction is Na(+)(in) + 2 H(+)(out) = Na(+)(out) + 2 H(+)(in). Its function is as follows. Na(+)/H(+) antiporter that extrudes sodium in exchange for external protons. In Campylobacter fetus subsp. fetus (strain 82-40), this protein is Na(+)/H(+) antiporter NhaA 2.